Here is a 302-residue protein sequence, read N- to C-terminus: UDP-N-acetylenolpyruvoylglucosamine reductase (302 aa).

Residues K29 to D192 form the FAD-binding PCMH-type domain. R172 is an active-site residue. Catalysis depends on S221, which acts as the Proton donor. Residue E291 is part of the active site.

Belongs to the MurB family. The cofactor is FAD.

It localises to the cytoplasm. The catalysed reaction is UDP-N-acetyl-alpha-D-muramate + NADP(+) = UDP-N-acetyl-3-O-(1-carboxyvinyl)-alpha-D-glucosamine + NADPH + H(+). Its pathway is cell wall biogenesis; peptidoglycan biosynthesis. In terms of biological role, cell wall formation. The chain is UDP-N-acetylenolpyruvoylglucosamine reductase from Trichlorobacter lovleyi (strain ATCC BAA-1151 / DSM 17278 / SZ) (Geobacter lovleyi).